The chain runs to 137 residues: Large ribosomal subunit protein uL16 (137 aa).

It belongs to the universal ribosomal protein uL16 family. As to quaternary structure, part of the 50S ribosomal subunit.

Its function is as follows. Binds 23S rRNA and is also seen to make contacts with the A and possibly P site tRNAs. The sequence is that of Large ribosomal subunit protein uL16 from Xanthobacter autotrophicus (strain ATCC BAA-1158 / Py2).